The sequence spans 228 residues: MLQAEMIVFVGVILWMCVFSQEPSSKVMADRYAVFWNRTNPRFQRGDYHIDVCINDYLDVYCPHYEDSVPEERTERYVLYMVNYDGYSTCDHTAKGFKRWECNRPHSPNGPLKFSEKFQLFTPFSLGFEFRPGREYYYISSMITETGRRSCLKLKVFVRPPNGCEKTIGVHDRVFVDDKVDNALEPRDDTSHEAEPSRSDVSTSGLRHQTSRPLLALLLLCISLYLLL.

Positions 1–20 (MLQAEMIVFVGVILWMCVFS) are cleaved as a signal peptide. The Ephrin RBD domain occupies 29-162 (ADRYAVFWNR…KLKVFVRPPN (134 aa)). A glycan (N-linked (GlcNAc...) asparagine) is linked at Asn37. 2 disulfide bridges follow: Cys62–Cys102 and Cys90–Cys151. A compositionally biased stretch (basic and acidic residues) spans 184-198 (LEPRDDTSHEAEPSR). The disordered stretch occupies residues 184-205 (LEPRDDTSHEAEPSRSDVSTSG). Ser204 is lipidated: GPI-anchor amidated serine. Residues 205 to 228 (GLRHQTSRPLLALLLLCISLYLLL) constitute a propeptide, removed in mature form.

Belongs to the ephrin family. In terms of tissue distribution, widespread expression in the embryo.

It localises to the cell membrane. In terms of biological role, cell surface GPI-bound ligand for Eph receptors, a family of receptor tyrosine kinases which are crucial for migration, repulsion and adhesion during neuronal, vascular and epithelial development. Binds promiscuously Eph receptors residing on adjacent cells, leading to contact-dependent bidirectional signaling into neighboring cells. Induces compartmentalized signaling within a caveolae-like membrane microdomain when bound to the extracellular domain of its cognate receptor. This signaling event requires the activity of the Fyn tyrosine kinase. Activates the epha3 receptor to regulate cell-cell adhesion and cytoskeletal organization. With the receptor epha2 may regulate lens fiber cells shape and interactions and be important for lens transparency maintenance. May function actively to stimulate axon fasciculation. Controls axon growth and may be involved in the creation of the retino-tectal map. This chain is Ephrin-A5b (efna5b), found in Danio rerio (Zebrafish).